The sequence spans 446 residues: uncharacterized protein (446 aa).

Phosphoserine is present on residues S393 and S397. The segment at 411-431 (LSSTERRDLDRVRDKQKKQDQ) is disordered.

This sequence belongs to the IFRD family.

Its subcellular location is the cytoplasm. This is an uncharacterized protein from Schizosaccharomyces pombe (strain 972 / ATCC 24843) (Fission yeast).